The sequence spans 305 residues: UDP-N-acetylenolpyruvoylglucosamine reductase 2 (305 aa).

The FAD-binding PCMH-type domain occupies 33–197 (VGGKADVFVA…LEARFELEEG (165 aa)). Arg176 is an active-site residue. Ser226 acts as the Proton donor in catalysis. Glu296 is an active-site residue.

The protein belongs to the MurB family. The cofactor is FAD.

The protein resides in the cytoplasm. It catalyses the reaction UDP-N-acetyl-alpha-D-muramate + NADP(+) = UDP-N-acetyl-3-O-(1-carboxyvinyl)-alpha-D-glucosamine + NADPH + H(+). It participates in cell wall biogenesis; peptidoglycan biosynthesis. Functionally, cell wall formation. The protein is UDP-N-acetylenolpyruvoylglucosamine reductase 2 (murB2) of Bacillus anthracis.